We begin with the raw amino-acid sequence, 395 residues long: Alanine racemase 2 (395 aa).

Lys60 acts as the Proton acceptor; specific for D-alanine in catalysis. N6-(pyridoxal phosphate)lysine is present on Lys60. Arg158 provides a ligand contact to substrate. The active-site Proton acceptor; specific for L-alanine is the Tyr288. Position 332 (Met332) interacts with substrate.

This sequence belongs to the alanine racemase family. Pyridoxal 5'-phosphate serves as cofactor.

The catalysed reaction is L-alanine = D-alanine. Its pathway is amino-acid biosynthesis; D-alanine biosynthesis; D-alanine from L-alanine: step 1/1. Catalyzes the interconversion of L-alanine and D-alanine. May also act on other amino acids. This is Alanine racemase 2 (alr2) from Clostridium acetobutylicum (strain ATCC 824 / DSM 792 / JCM 1419 / IAM 19013 / LMG 5710 / NBRC 13948 / NRRL B-527 / VKM B-1787 / 2291 / W).